The following is a 314-amino-acid chain: Olfactory receptor 52H1 (314 aa).

Over 1 to 32 (MIIFNLSSYNPGPFILVGIPGLEQFHVWIGIP) the chain is Extracellular. The N-linked (GlcNAc...) asparagine glycan is linked to Asn5. A helical membrane pass occupies residues 33 to 53 (FCIIYIVAVVGNCILLYLIVV). The Cytoplasmic segment spans residues 54–59 (EHSLHE). Residues 60 to 80 (PMFFFLSMLAMTDLILSTAGV) traverse the membrane as a helical segment. The Extracellular segment spans residues 81–101 (PKALSIFWLGAREITFPGCLT). Cys99 and Cys181 form a disulfide bridge. A helical membrane pass occupies residues 102-122 (QMFFLHYNFVLDSAILMAMAF). Topologically, residues 123–149 (DHYVAICSPLRYTTILTPKTIIKSAMG) are cytoplasmic. Residues 150–170 (ISFRSFCIILPDVFLLTCLPF) form a helical membrane-spanning segment. At 171–197 (CRTRIIPHTYCEHIGVAQLACADISIN) the chain is on the extracellular side. The chain crosses the membrane as a helical span at residues 198–218 (FWYGFCVPIMTVISDVILIAV). Over 219–242 (SYAHILCAVFGLPSQDACQKALGT) the chain is Cytoplasmic. The helical transmembrane segment at 243-263 (CGSHVCVILMFYTPAFFSILA) threads the bilayer. Topologically, residues 264 to 275 (HRFGHNVSRTFH) are extracellular. N-linked (GlcNAc...) asparagine glycosylation occurs at Asn269. The helical transmembrane segment at 276–296 (IMFANLYIVIPPALNPMVYGV) threads the bilayer. Residues 297-314 (KTKQIRDKVILLFSKGTG) are Cytoplasmic-facing.

Belongs to the G-protein coupled receptor 1 family.

It is found in the membrane. In terms of biological role, odorant receptor. This chain is Olfactory receptor 52H1 (OR52H1), found in Homo sapiens (Human).